The primary structure comprises 201 residues: Holliday junction branch migration complex subunit RuvA (201 aa).

A domain I region spans residues 1–64 (MIGRLRGELV…EDAHVLYGFA (64 aa)). Residues 65–143 (SESERALFRS…SLPAAVTLTG (79 aa)) are domain II. A flexible linker region spans residues 144–153 (GKPAAAAARA). The segment at 153-201 (APDPVSDAVSALVSLGYKPQEASRLISAVEGEAERSEDLIRLALKATLK) is domain III.

This sequence belongs to the RuvA family. Homotetramer. Forms an RuvA(8)-RuvB(12)-Holliday junction (HJ) complex. HJ DNA is sandwiched between 2 RuvA tetramers; dsDNA enters through RuvA and exits via RuvB. An RuvB hexamer assembles on each DNA strand where it exits the tetramer. Each RuvB hexamer is contacted by two RuvA subunits (via domain III) on 2 adjacent RuvB subunits; this complex drives branch migration. In the full resolvosome a probable DNA-RuvA(4)-RuvB(12)-RuvC(2) complex forms which resolves the HJ.

The protein resides in the cytoplasm. The RuvA-RuvB-RuvC complex processes Holliday junction (HJ) DNA during genetic recombination and DNA repair, while the RuvA-RuvB complex plays an important role in the rescue of blocked DNA replication forks via replication fork reversal (RFR). RuvA specifically binds to HJ cruciform DNA, conferring on it an open structure. The RuvB hexamer acts as an ATP-dependent pump, pulling dsDNA into and through the RuvAB complex. HJ branch migration allows RuvC to scan DNA until it finds its consensus sequence, where it cleaves and resolves the cruciform DNA. In Thioalkalivibrio sulfidiphilus (strain HL-EbGR7), this protein is Holliday junction branch migration complex subunit RuvA.